We begin with the raw amino-acid sequence, 273 residues long: Large ribosomal subunit protein uL2cz/uL2cy (273 aa).

Disordered regions lie at residues 1 to 25 (MAKH…VKSN) and 225 to 253 (PVDH…YPAL).

Belongs to the universal ribosomal protein uL2 family. As to quaternary structure, part of the 50S ribosomal subunit.

The protein localises to the plastid. Its subcellular location is the chloroplast. The polypeptide is Large ribosomal subunit protein uL2cz/uL2cy (rpl2-A) (Triticum aestivum (Wheat)).